We begin with the raw amino-acid sequence, 227 residues long: MASISYLLAPLVLAAVLQPTAGAPLDAPTESPAGETSGEEAETGSPDDALAVALESVLGATKLHKNEFLVEFQGEVKYDFLDRYKIPSLPAKCPYSNFGKDACLRRLLEGLLIYSVLLKRVEEEFPSSSILSEVRFYSNILIKELENKVRDRDQVMRLTSSQEEQLLKDTDYPDTFHRKMTAHGILYNLHYFLVDCRRVINKRAKHRESAGSRVVRAVTFYHPKKRS.

Positions 1–22 (MASISYLLAPLVLAAVLQPTAG) are cleaved as a signal peptide. Residues 24 to 45 (PLDAPTESPAGETSGEEAETGS) are disordered. Cysteines 93 and 103 form a disulfide.

The protein belongs to the IL-6 superfamily. Component of a hexamer of two molecules each of IL6, IL6R and IL6ST; first binds to IL6R to associate with the signaling subunit IL6ST. In terms of tissue distribution, after induction, highly expressed in spleen. Can also be expressed in kidney after incubation with PHA.

The protein localises to the secreted. In terms of biological role, cytokine with a wide variety of biological functions in immunity, tissue regeneration, and metabolism. Binds to IL6R, then the complex associates to the signaling subunit IL6ST/gp130 to trigger the intracellular IL6-signaling pathway. The interaction with the membrane-bound IL6R and IL6ST stimulates 'classic signaling', whereas the binding of IL6 and soluble IL6R to IL6ST stimulates 'trans-signaling'. Alternatively, 'cluster signaling' occurs when membrane-bound IL6:IL6R complexes on transmitter cells activate IL6ST receptors on neighboring receiver cells. The sequence is that of Interleukin-6 (il6) from Takifugu rubripes (Japanese pufferfish).